A 197-amino-acid chain; its full sequence is Pyridoxal 5'-phosphate synthase subunit PdxT (197 aa).

Residue 52–54 (GES) participates in L-glutamine binding. The active-site Nucleophile is cysteine 84. L-glutamine-binding positions include arginine 111 and 139-140 (IR). Residues histidine 175 and glutamate 177 each act as charge relay system in the active site.

This sequence belongs to the glutaminase PdxT/SNO family. In the presence of PdxS, forms a dodecamer of heterodimers. Only shows activity in the heterodimer.

The catalysed reaction is aldehydo-D-ribose 5-phosphate + D-glyceraldehyde 3-phosphate + L-glutamine = pyridoxal 5'-phosphate + L-glutamate + phosphate + 3 H2O + H(+). It carries out the reaction L-glutamine + H2O = L-glutamate + NH4(+). Its pathway is cofactor biosynthesis; pyridoxal 5'-phosphate biosynthesis. Functionally, catalyzes the hydrolysis of glutamine to glutamate and ammonia as part of the biosynthesis of pyridoxal 5'-phosphate. The resulting ammonia molecule is channeled to the active site of PdxS. This is Pyridoxal 5'-phosphate synthase subunit PdxT from Halorubrum lacusprofundi (strain ATCC 49239 / DSM 5036 / JCM 8891 / ACAM 34).